Consider the following 91-residue polypeptide: Small ribosomal subunit protein bS6 (91 aa).

The protein belongs to the bacterial ribosomal protein bS6 family.

Binds together with bS18 to 16S ribosomal RNA. This Leptospira interrogans serogroup Icterohaemorrhagiae serovar copenhageni (strain Fiocruz L1-130) protein is Small ribosomal subunit protein bS6.